Here is a 244-residue protein sequence, read N- to C-terminus: Lymphotoxin-beta (244 aa).

Topologically, residues 1 to 18 are cytoplasmic; sequence MGALGLEGRGGRLQGRGS. A helical; Signal-anchor for type II membrane protein transmembrane segment spans residues 19–48; that stretch reads LLLAVAGATSLVTLLLAVPITVLAVLALVP. Over 49–244 the chain is Extracellular; the sequence is QDQGGLVTDT…KTFFGAVMVG (196 aa). The 156-residue stretch at 88–243 folds into the THD domain; it reads PAAHLIGAPL…GKTFFGAVMV (156 aa). An N-linked (GlcNAc...) asparagine glycan is attached at N222.

Belongs to the tumor necrosis factor family. Heterotrimer of either two LTB and one LTA subunits or (less prevalent) two LTA and one LTB subunits.

The protein resides in the membrane. Its function is as follows. Cytokine that binds to LTBR/TNFRSF3. May play a specific role in immune response regulation. Provides the membrane anchor for the attachment of the heterotrimeric complex to the cell surface. This chain is Lymphotoxin-beta (LTB), found in Macaca mulatta (Rhesus macaque).